Consider the following 146-residue polypeptide: Hemoglobin subunit beta (146 aa).

Position 1 is an N-acetylvaline (V1). One can recognise a Globin domain in the interval 2 to 146; the sequence is HLTDAEKAAI…VASALAHKYH (145 aa). H63 provides a ligand contact to heme b. K82 carries the N6-acetyllysine modification. H92 provides a ligand contact to heme b. C93 carries the post-translational modification S-nitrosocysteine. The residue at position 144 (K144) is an N6-acetyllysine.

It belongs to the globin family. As to quaternary structure, heterotetramer of two alpha chains and two beta chains. In terms of tissue distribution, red blood cells.

Functionally, involved in oxygen transport from the lung to the various peripheral tissues. This is Hemoglobin subunit beta (HBB) from Microtus xanthognathus (Yellow-cheeked vole).